The chain runs to 291 residues: 5'-3' exonuclease (291 aa).

Residues 176–269 form the 5'-3' exonuclease domain; the sequence is TPKQVIEYKG…VHAALKPIDK (94 aa).

5'-3' exonuclease acting preferentially on double-stranded DNA. This chain is 5'-3' exonuclease (polA), found in Mycoplasma pneumoniae (strain ATCC 29342 / M129 / Subtype 1) (Mycoplasmoides pneumoniae).